A 529-amino-acid polypeptide reads, in one-letter code: Bifunctional purine biosynthesis protein PurH (529 aa).

The MGS-like domain maps to 1 to 148; it reads MQQRRPIRRA…KNHKDVAIVV (148 aa).

This sequence belongs to the PurH family.

The catalysed reaction is (6R)-10-formyltetrahydrofolate + 5-amino-1-(5-phospho-beta-D-ribosyl)imidazole-4-carboxamide = 5-formamido-1-(5-phospho-D-ribosyl)imidazole-4-carboxamide + (6S)-5,6,7,8-tetrahydrofolate. It carries out the reaction IMP + H2O = 5-formamido-1-(5-phospho-D-ribosyl)imidazole-4-carboxamide. It functions in the pathway purine metabolism; IMP biosynthesis via de novo pathway; 5-formamido-1-(5-phospho-D-ribosyl)imidazole-4-carboxamide from 5-amino-1-(5-phospho-D-ribosyl)imidazole-4-carboxamide (10-formyl THF route): step 1/1. The protein operates within purine metabolism; IMP biosynthesis via de novo pathway; IMP from 5-formamido-1-(5-phospho-D-ribosyl)imidazole-4-carboxamide: step 1/1. This Yersinia pseudotuberculosis serotype IB (strain PB1/+) protein is Bifunctional purine biosynthesis protein PurH.